We begin with the raw amino-acid sequence, 504 residues long: Maturase K (504 aa).

This sequence belongs to the intron maturase 2 family. MatK subfamily.

It localises to the plastid. The protein resides in the chloroplast. Functionally, usually encoded in the trnK tRNA gene intron. Probably assists in splicing its own and other chloroplast group II introns. In Fagus hayatae (Formosan elm), this protein is Maturase K.